The following is a 348-amino-acid chain: uncharacterized protein (348 aa).

The N-terminal stretch at 1–26 (MKKRIILLLAVIIAAAAAGVAFYVAK) is a signal peptide.

This is an uncharacterized protein from Bacillus subtilis (strain 168).